The following is a 1427-amino-acid chain: Multidrug resistance-associated protein 5 (1427 aa).

Residues 1 to 147 (MPSDSEEVCL…IYRFISTRLW (147 aa)) are Cytoplasmic-facing. A helical membrane pass occupies residues 148 to 168 (FSCAVFFFCLIFGFIGPTCFI). The region spanning 151–432 (AVFFFCLIFG…IPYGSRYLAE (282 aa)) is the ABC transmembrane type-1 1 domain. Topologically, residues 169 to 185 (RRLIAFAENPERDEQSR) are extracellular. The helical transmembrane segment at 186 to 206 (IVYSYGIALVAAISVVEFARV) threads the bilayer. The Cytoplasmic portion of the chain corresponds to 207–268 (LSYGATWAVS…RLFDAVTFAP (62 aa)). The chain crosses the membrane as a helical span at residues 269–289 (LVLVGPLVLVGGIGYLLMVIG). R290 is a topological domain (extracellular). The helical transmembrane segment at 291 to 311 (WSLLGILVFFVFDVIQFGLGK) threads the bilayer. Topologically, residues 312 to 375 (SMVACRNLAI…RKSGYAQSLA (64 aa)) are cytoplasmic. The helical transmembrane segment at 376 to 396 (IACGPVVPVVAAILTFVGVVL) threads the bilayer. Over 397 to 399 (AGN) the chain is Extracellular. Residues 400–420 (DLLASDAFSAITVYFVMLFGI) traverse the membrane as a helical segment. Residues 421-770 (RMIPYGSRYL…TIAWRIYKQY (350 aa)) lie on the Cytoplasmic side of the membrane. Residues 486–707 (PTENEVIVVE…NDAYKTFVDA (222 aa)) form the ABC transporter 1 domain. 518 to 525 (GAVGCGKS) serves as a coordination point for ATP. The helical transmembrane segment at 771-791 (IHAAGGWPIWTCLVIGFIVNV) threads the bilayer. The ABC transmembrane type-1 2 domain occupies 783–1078 (LVIGFIVNVV…AVRTQTELEA (296 aa)). Residues 792-833 (VSNIFSTYWLSRWLKKGHDETTTITNGTEFLEMKTSLADSPV) are Extracellular-facing. Residue N817 is glycosylated (N-linked (GlcNAc...) asparagine). Residues 834-854 (TGFYAAVYLVALVVLTISGLF) traverse the membrane as a helical segment. At 855-909 (KACVFVKVSLTAATRLHDRMFQAVIHGATSFFDSTPTGRILNRFSKDMDEIDVKL) the chain is on the cytoplasmic side. A helical membrane pass occupies residues 910-930 (PFTAEVFLQNMITCLGFLVVI). A topological domain (extracellular) is located at residue T931. The chain crosses the membrane as a helical span at residues 932-952 (SVFPYFLLFAIPLFVVFVVFV). Residues 953 to 1022 (SCFRAGIRNL…MFQSAMRWLA (70 aa)) lie on the Cytoplasmic side of the membrane. Residues 1023–1043 (VWLDLLVVVMTAIVALLTVML) form a helical membrane-spanning segment. Topologically, residues 1044-1049 (TGTVSP) are extracellular. Residues 1050–1070 (ADAGMAIAFAVQMSGIFQFAV) traverse the membrane as a helical segment. At 1071–1427 (RTQTELEAKM…SSDTDIEVVQ (357 aa)) the chain is on the cytoplasmic side. The 235-residue stretch at 1117 to 1351 (INFSEVNLRY…DWSVYKLEDK (235 aa)) folds into the ABC transporter 2 domain. 1151–1158 (GRTGSGKS) lines the ATP pocket. Residues 1361-1427 (VGENSEHSME…SSDTDIEVVQ (67 aa)) form a disordered region. Residues 1382–1418 (DIVKVENEQKDSSDDVVHIESGDDDVKADSSEVKETS) show a composition bias toward basic and acidic residues.

It belongs to the ABC transporter superfamily. ABCC family. Conjugate transporter (TC 3.A.1.208) subfamily. As to expression, highly expressed in the intestine and pharynx. Expressed at low levels in the hypodermis and in some neurons.

Its subcellular location is the basolateral cell membrane. Heme transporter required for the export of intestinal heme to different tissues and subcellular compartments. Also, required for the export of vitamin B12 from the intestine of the mother to the embryo to support embryonic development. This Caenorhabditis elegans protein is Multidrug resistance-associated protein 5.